The chain runs to 337 residues: 4-hydroxythreonine-4-phosphate dehydrogenase (337 aa).

2 residues coordinate substrate: histidine 139 and threonine 140. 3 residues coordinate a divalent metal cation: histidine 173, histidine 218, and histidine 273. Substrate contacts are provided by lysine 281, asparagine 290, and arginine 299.

The protein belongs to the PdxA family. As to quaternary structure, homodimer. It depends on Zn(2+) as a cofactor. Mg(2+) is required as a cofactor. Co(2+) serves as cofactor.

It is found in the cytoplasm. The enzyme catalyses 4-(phosphooxy)-L-threonine + NAD(+) = 3-amino-2-oxopropyl phosphate + CO2 + NADH. The protein operates within cofactor biosynthesis; pyridoxine 5'-phosphate biosynthesis; pyridoxine 5'-phosphate from D-erythrose 4-phosphate: step 4/5. Functionally, catalyzes the NAD(P)-dependent oxidation of 4-(phosphooxy)-L-threonine (HTP) into 2-amino-3-oxo-4-(phosphooxy)butyric acid which spontaneously decarboxylates to form 3-amino-2-oxopropyl phosphate (AHAP). This chain is 4-hydroxythreonine-4-phosphate dehydrogenase, found in Rhodopseudomonas palustris (strain ATCC BAA-98 / CGA009).